A 200-amino-acid polypeptide reads, in one-letter code: 5'(3')-deoxyribonucleotidase, cytosolic type (200 aa).

Aspartate 12 acts as the Nucleophile in catalysis. Aspartate 12 and aspartate 14 together coordinate Mg(2+). Aspartate 14 acts as the Proton donor in catalysis. Phenylalanine 20, phenylalanine 46, tyrosine 67, and threonine 101 together coordinate substrate. Threonine 102 bears the Phosphothreonine mark. A substrate-binding site is contributed by lysine 136. Aspartate 147 is a binding site for Mg(2+). Position 184 is a phosphoserine (serine 184).

The protein belongs to the 5'(3')-deoxyribonucleotidase family. Homodimer. Requires Mg(2+) as cofactor.

The protein localises to the cytoplasm. Dephosphorylates the 5' and 2'(3')-phosphates of deoxyribonucleotides, with a preference for dUMP and dTMP, intermediate activity towards dGMP, and low activity towards dCMP and dAMP. This Mus musculus (Mouse) protein is 5'(3')-deoxyribonucleotidase, cytosolic type (Nt5c).